A 488-amino-acid chain; its full sequence is IQ domain-containing protein IQM1 (488 aa).

Residues 20 to 46 (RTNSFKRDDTNRHQNSPKSTMERSLSF) are disordered. The segment covering 32-46 (HQNSPKSTMERSLSF) has biased composition (polar residues). Residues 106–135 (LDAAATTLQKVYKSYRTRRNLADCAVVVEE) enclose the IQ domain. 2 disordered regions span residues 377–403 (SFKSTADEEEERKEVSEEVEIPSEKEE) and 448–472 (SPRVSPANSYGPIPSPRPSPKVRVS). Positions 388–403 (RKEVSEEVEIPSEKEE) are enriched in basic and acidic residues.

In terms of assembly, interacts (via IQ domain) with CAM5. As to expression, highly expressed in leaf mesophyll cells. Expressed in roots, rosette and cauline leaves, stems, flowers and siliques.

It is found in the cytoplasm. The protein resides in the nucleus. Its function is as follows. Involved in the modulation of stomatal movement. Promotes stomatal opening. May play a role in the regulation of chitin signaling. May be involved in biotic and abiotic stress responses. In Arabidopsis thaliana (Mouse-ear cress), this protein is IQ domain-containing protein IQM1.